The primary structure comprises 540 residues: MPKIIAFDEEARRGLERGMNQLADAVKVTLGPKGRNVVLEKKWGVPTITNDGVSIAKEIELEDPYEKIGAELVKEVAKKTNDVAGDGTTTATILAQALVREGLRNVAAGANPLGLKKGIEVAVERVSEELSKQAKEVETKEQIASTASISAGDSAIGGLIAEALDKVGKEGVVTVEESNTFGLELELTEGMRFDKGYISPYFVTDADRQEAVLDDPYILIVNSKIAAVKDLLPLLEKVMQTSKPLVIISEDVEGEALATLVVNKIRGTFKSVAVKAPGFGDRRKAILGDIAILTGGQVISEDVGLKLESTSLDLLGRARKIVVTKDETTVVEGSGDPDQIAGRVSQIRNEIDKSDSDYDREKLQERLAKLAGGVAVIKVGAATEVELKEKKHRIEDAVSNAKAAVEEGIVAGGGVALLQASITAFEKLDLSGDEATGANIVRLALEAPIKQIAFNSGLEGGVVVDKVRNLPTGHGLNAATGEYVDLIATGIIDPAKVTRSALQNAASIAGLFLTTEAVIADKPEKNPAPAVPGGGGEMDF.

ATP-binding positions include 29 to 32 (TLGP), 86 to 90 (DGTTT), glycine 413, 477 to 479 (NAA), and aspartate 493.

Belongs to the chaperonin (HSP60) family. As to quaternary structure, forms a cylinder of 14 subunits composed of two heptameric rings stacked back-to-back. Interacts with the co-chaperonin GroES.

It localises to the cytoplasm. It carries out the reaction ATP + H2O + a folded polypeptide = ADP + phosphate + an unfolded polypeptide.. Functionally, together with its co-chaperonin GroES, plays an essential role in assisting protein folding. The GroEL-GroES system forms a nano-cage that allows encapsulation of the non-native substrate proteins and provides a physical environment optimized to promote and accelerate protein folding. In Frankia alni (strain DSM 45986 / CECT 9034 / ACN14a), this protein is Chaperonin GroEL 4.